The primary structure comprises 338 residues: MENLDALVAQALEAVQSAEDVNALEQIRVHYLGKKGELTQVMKTLGNLPAEERPQVGALINVAKERVTEVLNARKASLEEADLAAKLAAESIDVTLPGRGQASGGLHPITRTLERIEQFFTHIGYGIAEGPEVEDDYHNFEALNIPGHHPARSMHDTFYFNANMLLRTHTSPVQVRTMEANKPPIRIVCPGRVYRSDSDITHSPMFHQVEGLLVDRDINFADLKGTIEEFLRVFFEKELAVRFRPSFFPFTEPSAEVDMECVMCSGKGCRVCKQTGWLEVMGCGMVHPNVLRMSGIDPEEFSGFAFGMGVERLAMLRYGVNDLRLFFDNDLRFLAQFR.

E252 provides a ligand contact to Mg(2+).

This sequence belongs to the class-II aminoacyl-tRNA synthetase family. Phe-tRNA synthetase alpha subunit type 1 subfamily. In terms of assembly, tetramer of two alpha and two beta subunits. Mg(2+) serves as cofactor.

Its subcellular location is the cytoplasm. The catalysed reaction is tRNA(Phe) + L-phenylalanine + ATP = L-phenylalanyl-tRNA(Phe) + AMP + diphosphate + H(+). This Pseudomonas fluorescens (strain SBW25) protein is Phenylalanine--tRNA ligase alpha subunit.